The chain runs to 274 residues: N-acetylmuramic acid 6-phosphate etherase (274 aa).

An SIS domain is found at 54 to 217 (IIPRIDSGGR…STSVMIKLGR (164 aa)). Glu-82 (proton donor) is an active-site residue. Glu-113 is a catalytic residue.

This sequence belongs to the GCKR-like family. MurNAc-6-P etherase subfamily. Homodimer.

The catalysed reaction is N-acetyl-D-muramate 6-phosphate + H2O = N-acetyl-D-glucosamine 6-phosphate + (R)-lactate. Its pathway is amino-sugar metabolism; N-acetylmuramate degradation. In terms of biological role, specifically catalyzes the cleavage of the D-lactyl ether substituent of MurNAc 6-phosphate, producing GlcNAc 6-phosphate and D-lactate. The chain is N-acetylmuramic acid 6-phosphate etherase from Christiangramia forsetii (strain DSM 17595 / CGMCC 1.15422 / KT0803) (Gramella forsetii).